The chain runs to 342 residues: Phosphate acyltransferase (342 aa).

It belongs to the PlsX family. In terms of assembly, homodimer. Probably interacts with PlsY.

The protein localises to the cytoplasm. The catalysed reaction is a fatty acyl-[ACP] + phosphate = an acyl phosphate + holo-[ACP]. It functions in the pathway lipid metabolism; phospholipid metabolism. In terms of biological role, catalyzes the reversible formation of acyl-phosphate (acyl-PO(4)) from acyl-[acyl-carrier-protein] (acyl-ACP). This enzyme utilizes acyl-ACP as fatty acyl donor, but not acyl-CoA. This chain is Phosphate acyltransferase, found in Shewanella sp. (strain ANA-3).